The following is a 396-amino-acid chain: Unsaturated chondroitin disaccharide hydrolase (396 aa).

The Nucleophile role is filled by D113. Positions 113, 173, 231, 233, 245, 249, 363, and 366 each coordinate substrate. The Proton donor role is filled by D173.

Belongs to the glycosyl hydrolase 88 family. Monomer.

The enzyme catalyses beta-D-4-deoxy-Delta(4)-GlcpA-(1-&gt;3)-beta-D-GalpNAc6S + H2O = N-acetyl-beta-D-galactosamine 6-sulfate + 5-dehydro-4-deoxy-D-glucuronate. In terms of biological role, catalyzes the hydrolysis of unsaturated hyaluronate and chondroitin disaccharides. Also degrades unsaturated heparin disaccharides. Releases 4-deoxy-4,5-didehydro D-glucuronic acid or 4-deoxy-4,5-didehydro L-iduronic acid from chondroitin disaccharides, hyaluronan disaccharides and heparin disaccharides and cleaves both glycosidic (1-&gt;3) and (1-&gt;4) bonds. Prefers sulfated glycosaminoglycans compared to unsulfated glycosaminoglycans. Probably required for mammalian cells invasion through the degradation of extracellular sulfated glycosaminoglycans such as chondroitin and hyaluronan. In Streptococcus pneumoniae (strain ATCC BAA-255 / R6), this protein is Unsaturated chondroitin disaccharide hydrolase (ugl).